The primary structure comprises 99 residues: Large ribosomal subunit protein bL27 (99 aa).

The interval 1-21 is disordered; the sequence is MAHKKGGGSTRNGRDSRAKRL.

It belongs to the bacterial ribosomal protein bL27 family.

The protein is Large ribosomal subunit protein bL27 of Thermomicrobium roseum (strain ATCC 27502 / DSM 5159 / P-2).